The chain runs to 1203 residues: Plasma membrane calcium-transporting ATPase 4 (1203 aa).

Over Met1–Thr92 the chain is Cytoplasmic. Ser13 is modified (phosphoserine). The helical transmembrane segment at Phe93–Ala113 threads the bilayer. Topologically, residues Ile114–Ile150 are extracellular. The chain crosses the membrane as a helical span at residues Glu151–Trp171. At Ser172 to Leu356 the chain is on the cytoplasmic side. Residues Asp294–Val319 are disordered. 2 positions are modified to phosphoserine: Ser328 and Ser334. The tract at residues Glu330–Lys349 is disordered. The span at Ser334 to Lys349 shows a compositional bias: basic and acidic residues. Residues Thr357–Leu376 traverse the membrane as a helical segment. Over Ile377–Phe409 the chain is Extracellular. The helical transmembrane segment at Phe410–Leu427 threads the bilayer. The Cytoplasmic segment spans residues Ala428–Ile840. Asp465 serves as the catalytic 4-aspartylphosphate intermediate. Residues Asp785 and Asp789 each coordinate Mg(2+). Residues Ser841–Ser860 form a helical membrane-spanning segment. Topologically, residues Gly861–Leu870 are extracellular. The chain crosses the membrane as a helical span at residues Lys871 to Ala891. The Cytoplasmic segment spans residues Thr892–Leu911. Residues Ile912–Leu934 form a helical membrane-spanning segment. Residues Val935–Leu952 lie on the Extracellular side of the membrane. A helical membrane pass occupies residues Asn953–Asn974. Residues Glu975 to Arg993 lie on the Cytoplasmic side of the membrane. Residues Asn994–Gly1015 traverse the membrane as a helical segment. Topologically, residues Gly1016 to Thr1025 are extracellular. The chain crosses the membrane as a helical span at residues Met1026 to Ser1047. Over Ala1048–Val1203 the chain is Cytoplasmic. Residues Ser1064 and Ser1070 each carry the phosphoserine modification. The segment at Leu1086 to Gln1103 is calmodulin-binding subdomain A. Thr1102 carries the phosphothreonine; by PKC modification. Gln1103 is modified (phosphoserine). The calmodulin-binding subdomain B stretch occupies residues Ile1104–Phe1113. Phosphoserine occurs at positions 1114, 1115, 1126, and 1144.

Belongs to the cation transport ATPase (P-type) (TC 3.A.3) family. Type IIB subfamily. As to quaternary structure, interacts with PDZD11. Interacts with SLC35G1 and STIM1. Interacts with calmodulin. Ubiquitously expressed. Not detected in liver. The highest levels are found in uterus and stomach. Isoform XA is found in uterus, brain, stomach, small intestine, colon and pancreas. Isoform XB is found in uterus, skeletal muscle, lung, kidney, spleen, stomach, small intestine and pancreas. Isoform ZA is found in testis and isoform ZB is found in testis and heart.

Its subcellular location is the cell membrane. It is found in the cell projection. The protein resides in the cilium. The protein localises to the flagellum membrane. It catalyses the reaction Ca(2+)(in) + ATP + H2O = Ca(2+)(out) + ADP + phosphate + H(+). Activated by calcium/calmodulin. Functionally, calcium/calmodulin-regulated and magnesium-dependent enzyme that catalyzes the hydrolysis of ATP coupled with the transport of calcium out of the cell. By regulating sperm cell calcium homeostasis, may play a role in sperm motility. The chain is Plasma membrane calcium-transporting ATPase 4 from Rattus norvegicus (Rat).